Reading from the N-terminus, the 320-residue chain is ATP-dependent 6-phosphofructokinase (320 aa).

G12 is a binding site for ATP. R22 to R26 serves as a coordination point for ADP. Residues R73 to F74 and G103 to S106 contribute to the ATP site. D104 contacts Mg(2+). Substrate is bound at residue T126 to D128. Catalysis depends on D128, which acts as the Proton acceptor. R155 is a binding site for ADP. Residues R163 and M170–R172 contribute to the substrate site. ADP contacts are provided by residues G186–E188 and K214–H216. Substrate-binding positions include E223, R244, and H250–R253.

This sequence belongs to the phosphofructokinase type A (PFKA) family. ATP-dependent PFK group I subfamily. Prokaryotic clade 'B1' sub-subfamily. As to quaternary structure, homotetramer. The cofactor is Mg(2+).

The protein localises to the cytoplasm. It catalyses the reaction beta-D-fructose 6-phosphate + ATP = beta-D-fructose 1,6-bisphosphate + ADP + H(+). The protein operates within carbohydrate degradation; glycolysis; D-glyceraldehyde 3-phosphate and glycerone phosphate from D-glucose: step 3/4. Allosterically activated by ADP and other diphosphonucleosides, and allosterically inhibited by phosphoenolpyruvate. In terms of biological role, catalyzes the phosphorylation of D-fructose 6-phosphate to fructose 1,6-bisphosphate by ATP, the first committing step of glycolysis. This Teredinibacter turnerae (strain ATCC 39867 / T7901) protein is ATP-dependent 6-phosphofructokinase.